The primary structure comprises 234 residues: Geranylgeranylglyceryl phosphate synthase (234 aa).

The Mg(2+) site is built by aspartate 24 and serine 52. Sn-glycerol 1-phosphate contacts are provided by residues 172 to 178 (YLEAGSG), 203 to 204 (GG), and 225 to 226 (GT).

The protein belongs to the GGGP/HepGP synthase family. Group II subfamily. In terms of assembly, homodimer. Mg(2+) is required as a cofactor.

The enzyme catalyses sn-glycerol 1-phosphate + (2E,6E,10E)-geranylgeranyl diphosphate = sn-3-O-(geranylgeranyl)glycerol 1-phosphate + diphosphate. Functionally, prenyltransferase that catalyzes the transfer of the geranylgeranyl moiety of geranylgeranyl diphosphate (GGPP) to the C3 hydroxyl of sn-glycerol-1-phosphate (G1P). The chain is Geranylgeranylglyceryl phosphate synthase from Zunongwangia profunda (strain DSM 18752 / CCTCC AB 206139 / SM-A87) (Wangia profunda).